The chain runs to 183 residues: Ferritin heavy polypeptide-like 17 (183 aa).

Positions 11 to 160 (QKYDTNCDAA…GYVSNLRKIC (150 aa)) constitute a Ferritin-like diiron domain. Fe cation contacts are provided by glutamate 28, histidine 66, glutamate 108, and glutamine 142.

This sequence belongs to the ferritin family. As to expression, testis specific. Also expressed in several cancers.

In Homo sapiens (Human), this protein is Ferritin heavy polypeptide-like 17 (FTHL17).